Consider the following 389-residue polypeptide: Probable dual-specificity RNA methyltransferase RlmN (389 aa).

The Proton acceptor role is filled by Glu114. The Radical SAM core domain maps to 120–358 (QHYGLSVCVT…CVVRQEHGTD (239 aa)). Cys127 and Cys363 are disulfide-bonded. [4Fe-4S] cluster is bound by residues Cys134, Cys138, and Cys141. S-adenosyl-L-methionine contacts are provided by residues 186–187 (GE), Ser218, 241–243 (SLH), and Asn319. Residue Cys363 is the S-methylcysteine intermediate of the active site. Residues 370–389 (TMKRDRQKAVAEASGKSEGK) are disordered. A compositionally biased stretch (basic and acidic residues) spans 371–389 (MKRDRQKAVAEASGKSEGK).

The protein belongs to the radical SAM superfamily. RlmN family. [4Fe-4S] cluster is required as a cofactor.

The protein localises to the cytoplasm. The enzyme catalyses adenosine(2503) in 23S rRNA + 2 reduced [2Fe-2S]-[ferredoxin] + 2 S-adenosyl-L-methionine = 2-methyladenosine(2503) in 23S rRNA + 5'-deoxyadenosine + L-methionine + 2 oxidized [2Fe-2S]-[ferredoxin] + S-adenosyl-L-homocysteine. It carries out the reaction adenosine(37) in tRNA + 2 reduced [2Fe-2S]-[ferredoxin] + 2 S-adenosyl-L-methionine = 2-methyladenosine(37) in tRNA + 5'-deoxyadenosine + L-methionine + 2 oxidized [2Fe-2S]-[ferredoxin] + S-adenosyl-L-homocysteine. Functionally, specifically methylates position 2 of adenine 2503 in 23S rRNA and position 2 of adenine 37 in tRNAs. The sequence is that of Probable dual-specificity RNA methyltransferase RlmN from Streptococcus thermophilus (strain CNRZ 1066).